Reading from the N-terminus, the 628-residue chain is Choline transporter-like protein 2 (628 aa).

Over 1-31 the chain is Cytoplasmic; it reads MSSEDLQDHHEIGNEVIKKKGVYTKKKCQDC. A helical membrane pass occupies residues 32 to 52; that stretch reads FFLILFLLFWAGMIVVAAFGV. The Extracellular segment spans residues 53-204; the sequence is KNGKPDRIVK…EILTDLTNSW (152 aa). N-linked (GlcNAc...) asparagine glycosylation is found at N82, N118, N146, and N168. Residues 205-225 form a helical membrane-spanning segment; sequence RYLIYGALIAMGLGLTWIFLL. Residue R226 is a topological domain, cytoplasmic. The chain crosses the membrane as a helical span at residues 227–247; the sequence is FFAGFITWLTVFAAYACLGLL. The Extracellular portion of the chain corresponds to 248–282; that stretch reads TAQVYFQWQDSKDAYENTIPSQRLVMQEKNILALK. Residues 283–303 form a helical membrane-spanning segment; it reads VIFIILCVVCGIFALILLALF. The Cytoplasmic segment spans residues 304–319; it reads SRIRIAIRIIKECSRA. The helical transmembrane segment at 320 to 340 threads the bilayer; the sequence is IGIMPSIFFFPIFIFLLLCGF. Residues 341 to 381 are Extracellular-facing; the sequence is TVYWVYIGVYLATAGSPTYDDQYRFTGYEADSKLQKIQIYH. The chain crosses the membrane as a helical span at residues 382-402; sequence FFGYLWTFAFILALNQTTIAG. Topologically, residues 403–432 are cytoplasmic; that stretch reads AISSWYWVQDKKDTPFFPVWSSFFRVIRYH. The chain crosses the membrane as a helical span at residues 433-453; it reads LGSIALGSLILAIVQFIRWVL. Residues 454 to 530 lie on the Extracellular side of the membrane; the sequence is RFLEKKFKGK…RVAAVNLVSS (77 aa). The chain crosses the membrane as a helical span at residues 531–551; that stretch reads FLMFLGRVFITAATVGISLYL. Residues 552–559 are Cytoplasmic-facing; that stretch reads LKEHENLS. Residues 560-580 traverse the membrane as a helical segment; it reads FYIIPVILIGFIAFAISTGFM. At 581–628 the chain is on the extracellular side; it reads SVYDMSIDTMLLCFCEDCERNDGSPERPYYMSKSLRKFVDGKGRSKCC.

It belongs to the CTL (choline transporter-like) family.

The protein resides in the cell membrane. It is found in the mitochondrion outer membrane. It catalyses the reaction choline(out) + n H(+)(in) = choline(in) + n H(+)(out). It carries out the reaction ethanolamine(out) + n H(+)(in) = ethanolamine(in) + n H(+)(out). Functionally, choline/H+ antiporter, mainly in mitochodria. Also acts as a low-affinity ethanolamine/H+ antiporter, regulating the supply of extracellular ethanolamine (Etn) for the CDP-Etn pathway, redistribute intracellular Etn and balance the CDP-Cho and CDP-Etn arms of the Kennedy pathway. This Dictyostelium discoideum (Social amoeba) protein is Choline transporter-like protein 2 (slc44a2).